The following is a 584-amino-acid chain: Proline--tRNA ligase (584 aa).

Residues 242-261 (APPASNPEERPATQVHDTPD) form a disordered region.

This sequence belongs to the class-II aminoacyl-tRNA synthetase family. ProS type 1 subfamily. Homodimer.

The protein resides in the cytoplasm. The enzyme catalyses tRNA(Pro) + L-proline + ATP = L-prolyl-tRNA(Pro) + AMP + diphosphate. Its function is as follows. Catalyzes the attachment of proline to tRNA(Pro) in a two-step reaction: proline is first activated by ATP to form Pro-AMP and then transferred to the acceptor end of tRNA(Pro). As ProRS can inadvertently accommodate and process non-cognate amino acids such as alanine and cysteine, to avoid such errors it has two additional distinct editing activities against alanine. One activity is designated as 'pretransfer' editing and involves the tRNA(Pro)-independent hydrolysis of activated Ala-AMP. The other activity is designated 'posttransfer' editing and involves deacylation of mischarged Ala-tRNA(Pro). The misacylated Cys-tRNA(Pro) is not edited by ProRS. This is Proline--tRNA ligase from Salinispora arenicola (strain CNS-205).